A 383-amino-acid polypeptide reads, in one-letter code: 8-amino-7-oxononanoate synthase (383 aa).

A substrate-binding site is contributed by Arg21. Position 108 to 109 (108 to 109 (GF)) interacts with pyridoxal 5'-phosphate. Substrate is bound at residue His133. Ser179, His207, and Thr233 together coordinate pyridoxal 5'-phosphate. Residue Lys236 is modified to N6-(pyridoxal phosphate)lysine. Thr350 contributes to the substrate binding site.

This sequence belongs to the class-II pyridoxal-phosphate-dependent aminotransferase family. BioF subfamily. As to quaternary structure, homodimer. It depends on pyridoxal 5'-phosphate as a cofactor.

It catalyses the reaction 6-carboxyhexanoyl-[ACP] + L-alanine + H(+) = (8S)-8-amino-7-oxononanoate + holo-[ACP] + CO2. It participates in cofactor biosynthesis; biotin biosynthesis. In terms of biological role, catalyzes the decarboxylative condensation of pimeloyl-[acyl-carrier protein] and L-alanine to produce 8-amino-7-oxononanoate (AON), [acyl-carrier protein], and carbon dioxide. This is 8-amino-7-oxononanoate synthase from Cronobacter sakazakii (strain ATCC BAA-894) (Enterobacter sakazakii).